We begin with the raw amino-acid sequence, 505 residues long: Ribosomal RNA small subunit methyltransferase F (505 aa).

Residues 123 to 129 (ASAPGSK), E147, D174, and D192 contribute to the S-adenosyl-L-methionine site. C245 (nucleophile) is an active-site residue. Residues 409–437 (GTNANNNSNTNPNNNANTNPNNNSNTNPR) form a disordered region. Positions 410–435 (TNANNNSNTNPNNNANTNPNNNSNTN) are enriched in low complexity.

The protein belongs to the class I-like SAM-binding methyltransferase superfamily. RsmB/NOP family.

It localises to the cytoplasm. It carries out the reaction cytidine(1407) in 16S rRNA + S-adenosyl-L-methionine = 5-methylcytidine(1407) in 16S rRNA + S-adenosyl-L-homocysteine + H(+). Its function is as follows. Specifically methylates the cytosine at position 1407 (m5C1407) of 16S rRNA. This Shewanella denitrificans (strain OS217 / ATCC BAA-1090 / DSM 15013) protein is Ribosomal RNA small subunit methyltransferase F.